We begin with the raw amino-acid sequence, 384 residues long: 2-isopropylmalate synthase 2 (384 aa).

The 252-residue stretch at 9–260 folds into the Pyruvate carboxyltransferase domain; sequence VYIVDTTLRD…DLGIDTSRFR (252 aa). Mn(2+) contacts are provided by aspartate 18, histidine 198, histidine 200, and asparagine 234.

Belongs to the alpha-IPM synthase/homocitrate synthase family. LeuA type 1 subfamily. As to quaternary structure, homodimer. Requires Mn(2+) as cofactor.

It localises to the cytoplasm. It carries out the reaction 3-methyl-2-oxobutanoate + acetyl-CoA + H2O = (2S)-2-isopropylmalate + CoA + H(+). The protein operates within amino-acid biosynthesis; L-leucine biosynthesis; L-leucine from 3-methyl-2-oxobutanoate: step 1/4. In terms of biological role, catalyzes the condensation of the acetyl group of acetyl-CoA with 3-methyl-2-oxobutanoate (2-ketoisovalerate) to form 3-carboxy-3-hydroxy-4-methylpentanoate (2-isopropylmalate). This is 2-isopropylmalate synthase 2 from Caldanaerobacter subterraneus subsp. tengcongensis (strain DSM 15242 / JCM 11007 / NBRC 100824 / MB4) (Thermoanaerobacter tengcongensis).